Here is a 1229-residue protein sequence, read N- to C-terminus: Receptor-type adenylate cyclase GRESAG 4.3 (1229 aa).

The Cytoplasmic segment spans residues 1 to 24 (MIARVCRLTKHSKPPHLPITLTTP). Residues 25 to 45 (TLFLVVLVLLQLHPICVLVNV) traverse the membrane as a helical segment. Over 46–845 (DDGGGVTVKA…PNGNALTPAQ (800 aa)) the chain is Extracellular. Residues N77, N84, N626, N693, and N768 are each glycosylated (N-linked (GlcNAc...) asparagine). Residues 846–866 (LAGVVGGSLFVVALAICLSVL) form a helical membrane-spanning segment. Residues 867-1229 (ACFTLRGTRD…SNDLSDMIRV (363 aa)) are Cytoplasmic-facing. In terms of domain architecture, Guanylate cyclase spans 889-1043 (TLIFTDIESS…RTSNMAARTE (155 aa)). Mg(2+) is bound by residues D894 and D937.

The protein belongs to the adenylyl cyclase class-3 family. It depends on Mg(2+) as a cofactor.

The protein resides in the membrane. It catalyses the reaction ATP = 3',5'-cyclic AMP + diphosphate. Functionally, could act as a receptor for an unknown ligand. The protein is Receptor-type adenylate cyclase GRESAG 4.3 (GRESAG 4.3) of Trypanosoma brucei brucei.